We begin with the raw amino-acid sequence, 311 residues long: MKKKIGLLVMAYGTPYKEEDIERYYTHIRRGRKPSPEMLEDLTERYRAIGGISPLATITLEQAKKLEKRLNEVQDEVEYHMYLGLKHIEPFIEDAVKEMHNDGIQDAIALVLAPHYSTFSVKSYVGRAQEEAEKLGNLTIHGIDSWYKEPKFIQYWVDAVKGIYNGMSDAEREKAVLIVSAHSLPEKIIAMGDPYPDQLNETADYIARGAEVANYAVGWQSAGNTPDPWIGPDVQDLTRELNEKYGYTSFVYAPVGFVAEHLEVLYDNDFECKVVTDEIGAKYYRPEMPNASDAFIDSLTDVVVKKKESVM.

Residues Tyr-12, Arg-29, 45–46 (RY), Ser-53, and Tyr-124 contribute to the Fe-coproporphyrin III site. Fe(2+) is bound by residues His-182 and Glu-263.

It belongs to the ferrochelatase family.

The protein localises to the cytoplasm. The catalysed reaction is Fe-coproporphyrin III + 2 H(+) = coproporphyrin III + Fe(2+). It participates in porphyrin-containing compound metabolism; protoheme biosynthesis. Functionally, involved in coproporphyrin-dependent heme b biosynthesis. Catalyzes the insertion of ferrous iron into coproporphyrin III to form Fe-coproporphyrin III. This chain is Coproporphyrin III ferrochelatase 1, found in Bacillus cereus (strain ZK / E33L).